The sequence spans 676 residues: MAMGLIRLLSIAFTLVLLSILPLHLSLADEITSIESVPDLQKLMYVAVDGFPCVRLLNLSGEIGCSNPGINKVVAPIIKLKDVKDLVQPHTILVTADEMEDFFTRVSTDLSFASKIGGVLVESGSNFQQKLKGFSPDKRFPQAQFSPYENVEYKWNSAASSIMWRNYNFPVYLLSESGISAVHEILSKKKMKHGTYTSDVAEFNMVMETTKAGTHNSEACLQEGTCLPLGGYSVWSSLPPISVSSSNNRKPVVLTVASMDTASFFRDKSFGADSPISGLVALLGAVDALSRVDGISNLKKQLVFLVLTGETWGYLGSRRFLHELDLHSDAVAGLSNTSIETVLEIGSVGKGLSGGINTFFAHKTRVSSVTNMTLDALKIAQDSLASKNIKILSADTANPGIPPSSLMAFMRKNPQTSAVVLEDFDTNFVNKFYHSHLDDLSNINSSSVVAAASVVARTLYILASDNKDTSNSALGSIHVNASFVEELLTCLLACEPGLSCNLVKDYISPTNTCPGNYAGVILGEPSSKPYLGYVGDVSRFLWNFLADKTSVQKGNTTSVCSKGVCSKTDEVCIKAESNKEGTCVVSTTRYVPAYSTRLKYNDGAWTILPQNSSDSMGMVDPVWTESNWDTLRVHVYTVQHSAYDNAVLVAGITVTTLAYIGILAAKSIITKALKQD.

Residues 1-28 (MAMGLIRLLSIAFTLVLLSILPLHLSLA) form the signal peptide. Residues 29–644 (DEITSIESVP…VYTVQHSAYD (616 aa)) are Extracellular-facing. N-linked (GlcNAc...) asparagine glycans are attached at residues asparagine 58, asparagine 336, asparagine 371, asparagine 444, asparagine 480, asparagine 555, and asparagine 611. A helical membrane pass occupies residues 645–665 (NAVLVAGITVTTLAYIGILAA). The Cytoplasmic segment spans residues 666–676 (KSIITKALKQD).

Belongs to the nicastrin family. As to quaternary structure, probable component of the gamma-secretase complex, a complex composed of a presenilin homodimer, nicastrin, APH1 and PEN2.

The protein resides in the membrane. Probable subunit of the gamma-secretase complex, an endoprotease complex that catalyzes the intramembrane cleavage of integral membrane proteins such as Notch. This is Nicastrin from Arabidopsis thaliana (Mouse-ear cress).